The following is a 546-amino-acid chain: CTP synthase (546 aa).

Residues 1–266 (MAKYYIFITG…DSYVCDRFCI (266 aa)) form an amidoligase domain region. A CTP-binding site is contributed by serine 14. Serine 14 lines the UTP pocket. ATP contacts are provided by residues 15-20 (SLGKGI) and aspartate 72. Positions 72 and 140 each coordinate Mg(2+). CTP is bound by residues 147–149 (DIE), 187–192 (KTKPTQ), and lysine 223. UTP is bound by residues 187–192 (KTKPTQ) and lysine 223. A Glutamine amidotransferase type-1 domain is found at 291 to 544 (NIGIIGKYTE…VKAAFDFKNK (254 aa)). Glycine 352 contacts L-glutamine. Cysteine 379 functions as the Nucleophile; for glutamine hydrolysis in the catalytic mechanism. L-glutamine-binding positions include 380 to 383 (LGMQ), glutamate 403, and arginine 470. Active-site residues include histidine 517 and glutamate 519.

The protein belongs to the CTP synthase family. In terms of assembly, homotetramer.

It carries out the reaction UTP + L-glutamine + ATP + H2O = CTP + L-glutamate + ADP + phosphate + 2 H(+). The enzyme catalyses L-glutamine + H2O = L-glutamate + NH4(+). It catalyses the reaction UTP + NH4(+) + ATP = CTP + ADP + phosphate + 2 H(+). Its pathway is pyrimidine metabolism; CTP biosynthesis via de novo pathway; CTP from UDP: step 2/2. Its activity is regulated as follows. Allosterically activated by GTP, when glutamine is the substrate; GTP has no effect on the reaction when ammonia is the substrate. The allosteric effector GTP functions by stabilizing the protein conformation that binds the tetrahedral intermediate(s) formed during glutamine hydrolysis. Inhibited by the product CTP, via allosteric rather than competitive inhibition. Functionally, catalyzes the ATP-dependent amination of UTP to CTP with either L-glutamine or ammonia as the source of nitrogen. Regulates intracellular CTP levels through interactions with the four ribonucleotide triphosphates. This chain is CTP synthase, found in Wigglesworthia glossinidia brevipalpis.